Here is a 103-residue protein sequence, read N- to C-terminus: Sec-independent protein translocase protein TatA (103 aa).

A helical membrane pass occupies residues 1–21; the sequence is MGNIFSPTHLIVILLIIIVLF. The interval 77-103 is disordered; it reads KRATTRVKGSSSSRKGKTSVVKKQRVK. Basic residues predominate over residues 90–103; that stretch reads RKGKTSVVKKQRVK.

The protein belongs to the TatA/E family. The Tat system comprises two distinct complexes: a TatABC complex, containing multiple copies of TatA, TatB and TatC subunits, and a separate TatA complex, containing only TatA subunits. Substrates initially bind to the TatABC complex, which probably triggers association of the separate TatA complex to form the active translocon.

It localises to the cell inner membrane. Part of the twin-arginine translocation (Tat) system that transports large folded proteins containing a characteristic twin-arginine motif in their signal peptide across membranes. TatA could form the protein-conducting channel of the Tat system. The sequence is that of Sec-independent protein translocase protein TatA from Bartonella henselae (strain ATCC 49882 / DSM 28221 / CCUG 30454 / Houston 1) (Rochalimaea henselae).